The following is a 141-amino-acid chain: Large ribosomal subunit protein uL11 (141 aa).

This sequence belongs to the universal ribosomal protein uL11 family. In terms of assembly, part of the ribosomal stalk of the 50S ribosomal subunit. Interacts with L10 and the large rRNA to form the base of the stalk. L10 forms an elongated spine to which L12 dimers bind in a sequential fashion forming a multimeric L10(L12)X complex. Post-translationally, one or more lysine residues are methylated.

Functionally, forms part of the ribosomal stalk which helps the ribosome interact with GTP-bound translation factors. The polypeptide is Large ribosomal subunit protein uL11 (Nostoc punctiforme (strain ATCC 29133 / PCC 73102)).